The primary structure comprises 1024 residues: Protein translocase subunit SecA (1024 aa).

ATP-binding positions include Q143, 161 to 165, and D661; that span reads GEGKT. The interval 970–1024 is disordered; the sequence is HEEAGSVYNAQPDGEPESQASKQQPVVADHSKPGRNDLCPCGSGKKYKNCHGREA. Zn(2+) is bound by residues C1008, C1010, C1019, and H1020. Positions 1014-1024 are enriched in basic residues; the sequence is KKYKNCHGREA.

It belongs to the SecA family. Monomer and homodimer. Part of the essential Sec protein translocation apparatus which comprises SecA, SecYEG and auxiliary proteins SecDF. Other proteins may also be involved. Zn(2+) serves as cofactor.

Its subcellular location is the cell inner membrane. The protein localises to the cytoplasm. The enzyme catalyses ATP + H2O + cellular proteinSide 1 = ADP + phosphate + cellular proteinSide 2.. Functionally, part of the Sec protein translocase complex. Interacts with the SecYEG preprotein conducting channel. Has a central role in coupling the hydrolysis of ATP to the transfer of proteins into and across the cell membrane, serving as an ATP-driven molecular motor driving the stepwise translocation of polypeptide chains across the membrane. The polypeptide is Protein translocase subunit SecA (Chlorobium luteolum (strain DSM 273 / BCRC 81028 / 2530) (Pelodictyon luteolum)).